The primary structure comprises 320 residues: Lipoyl synthase (320 aa).

Residues 1-11 are compositionally biased toward polar residues; the sequence is MGGMNDLSSTP. The interval 1 to 24 is disordered; sequence MGGMNDLSSTPAPEGDRPARQRKP. The segment covering 14-24 has biased composition (basic and acidic residues); it reads EGDRPARQRKP. Positions 53, 58, 64, 79, 83, 86, and 293 each coordinate [4Fe-4S] cluster. A Radical SAM core domain is found at 65–282; that stretch reads WTKKHATVMI…GAIARAKGFL (218 aa).

The protein belongs to the radical SAM superfamily. Lipoyl synthase family. [4Fe-4S] cluster serves as cofactor.

The protein resides in the cytoplasm. The enzyme catalyses [[Fe-S] cluster scaffold protein carrying a second [4Fe-4S](2+) cluster] + N(6)-octanoyl-L-lysyl-[protein] + 2 oxidized [2Fe-2S]-[ferredoxin] + 2 S-adenosyl-L-methionine + 4 H(+) = [[Fe-S] cluster scaffold protein] + N(6)-[(R)-dihydrolipoyl]-L-lysyl-[protein] + 4 Fe(3+) + 2 hydrogen sulfide + 2 5'-deoxyadenosine + 2 L-methionine + 2 reduced [2Fe-2S]-[ferredoxin]. The protein operates within protein modification; protein lipoylation via endogenous pathway; protein N(6)-(lipoyl)lysine from octanoyl-[acyl-carrier-protein]: step 2/2. Functionally, catalyzes the radical-mediated insertion of two sulfur atoms into the C-6 and C-8 positions of the octanoyl moiety bound to the lipoyl domains of lipoate-dependent enzymes, thereby converting the octanoylated domains into lipoylated derivatives. This Erythrobacter litoralis (strain HTCC2594) protein is Lipoyl synthase.